The following is an 880-amino-acid chain: Probable LRR receptor-like serine/threonine-protein kinase At2g28960 (880 aa).

Positions 1–24 (MEGRRQRLLVFIFGALAITHLVQA) are cleaved as a signal peptide. Residues 25-511 (QPPDQRGFIS…NNNNQTYIVP (487 aa)) are Extracellular-facing. Asn-180, Asn-201, Asn-228, Asn-254, Asn-287, Asn-403, Asn-430, and Asn-441 each carry an N-linked (GlcNAc...) asparagine glycan. LRR repeat units lie at residues 409 to 430 (RIIS…AFQN), 433 to 455 (ELRK…LASM), and 457 to 476 (SLSI…PKLL). The N-linked (GlcNAc...) asparagine glycan is linked to Asn-505. Residues 512–532 (VVASVASVLIIIAVLILILVF) traverse the membrane as a helical segment. Over 533–880 (KKRRPTQVDS…FTTEINPKAR (348 aa)) the chain is Cytoplasmic. At Thr-564 the chain carries Phosphothreonine. Residues 573 to 846 (DNFERVLGEG…QVTNELKQCL (274 aa)) form the Protein kinase domain. ATP is bound by residues 579-587 (LGEGGFGVV) and Lys-601. Residue Tyr-646 is modified to Phosphotyrosine. Residue Asp-698 is the Proton acceptor of the active site. Ser-732 is modified (phosphoserine). A phosphothreonine mark is found at Thr-733 and Thr-738. Tyr-746 bears the Phosphotyrosine mark. Residues 854 to 880 (GVREDMGSRSSVEMSTSFTTEINPKAR) form a disordered region. Residues 861 to 880 (SRSSVEMSTSFTTEINPKAR) are compositionally biased toward polar residues.

The protein belongs to the protein kinase superfamily. Ser/Thr protein kinase family.

Its subcellular location is the membrane. The catalysed reaction is L-seryl-[protein] + ATP = O-phospho-L-seryl-[protein] + ADP + H(+). It catalyses the reaction L-threonyl-[protein] + ATP = O-phospho-L-threonyl-[protein] + ADP + H(+). This Arabidopsis thaliana (Mouse-ear cress) protein is Probable LRR receptor-like serine/threonine-protein kinase At2g28960.